We begin with the raw amino-acid sequence, 247 residues long: Cell division protein ZapD (247 aa).

Belongs to the ZapD family. In terms of assembly, interacts with FtsZ.

Its subcellular location is the cytoplasm. Cell division factor that enhances FtsZ-ring assembly. Directly interacts with FtsZ and promotes bundling of FtsZ protofilaments, with a reduction in FtsZ GTPase activity. The chain is Cell division protein ZapD from Klebsiella pneumoniae (strain 342).